Consider the following 247-residue polypeptide: 1-(5-phosphoribosyl)-5-[(5-phosphoribosylamino)methylideneamino] imidazole-4-carboxamide isomerase 2 (247 aa).

Catalysis depends on E8, which acts as the Proton acceptor. The active-site Proton donor is the D128.

The protein belongs to the HisA/HisF family.

It localises to the cytoplasm. It carries out the reaction 1-(5-phospho-beta-D-ribosyl)-5-[(5-phospho-beta-D-ribosylamino)methylideneamino]imidazole-4-carboxamide = 5-[(5-phospho-1-deoxy-D-ribulos-1-ylimino)methylamino]-1-(5-phospho-beta-D-ribosyl)imidazole-4-carboxamide. It functions in the pathway amino-acid biosynthesis; L-histidine biosynthesis; L-histidine from 5-phospho-alpha-D-ribose 1-diphosphate: step 4/9. The chain is 1-(5-phosphoribosyl)-5-[(5-phosphoribosylamino)methylideneamino] imidazole-4-carboxamide isomerase 2 from Ruegeria pomeroyi (strain ATCC 700808 / DSM 15171 / DSS-3) (Silicibacter pomeroyi).